The sequence spans 575 residues: MKRSLQALYCQLLSFLLILALTEALAFAIQEPSPRESLQVLPSGTPPGTMVTAPHSSTRHTSVVMLTPNPDGPPSQAAAPMATPTPRAEGHPPTHTISTIAATVTAPHSESSLSTGPAPAAMATTSSKPEGRPRGQAAPTILLTKPPGATSRPTTAPPRTTTRRPPRPPGSSRKGAGNSSRPVPPAPGGHSRSKEGQRGRNPSSTPLGQKRPLGKIFQIYKGNFTGSVEPEPSTLTPRTPLWGYSSSPQPQTVAATTVPSNTSWAPTTTSLGPAKDKPGLRRAAQGGGSTFTSQGGTPDATAASGAPVSPQAAPVPSQRPHHGDPQDGPSHSDSWLTVTPGTSRPLSTSSGVFTAATGPTPAAFDTSVSAPSQGIPQGASTTPQAPTHPSRVSESTISGAKEETVATLTMTDRVPSPLSTVVSTATGNFLNRLVPAGTWKPGTAGNISHVAEGDKPQHRATICLSKMDIAWVILAISVPISSCSVLLTVCCMKRKKKTANPENNLSYWNNTITMDYFNRHAVELPREIQSLETSEDQLSEPRSPANGDYRDTGMVLVNPFCQETLFVGNDQVSEI.

A helical transmembrane segment spans residues 9-29 (YCQLLSFLLILALTEALAFAI). The segment at 31 to 169 (EPSPRESLQV…TTTRRPPRPP (139 aa)) is interaction with SH3GL2. Residues 65–398 (MLTPNPDGPP…PSRVSESTIS (334 aa)) are disordered. Residues 74-87 (PSQAAAPMATPTPR) show a composition bias toward low complexity. The span at 95 to 115 (HTISTIAATVTAPHSESSLST) shows a compositional bias: polar residues. The span at 146–160 (PPGATSRPTTAPPRT) shows a compositional bias: low complexity. An interaction with DST (isoform 1) region spans residues 173–407 (RKGAGNSSRP…SGAKEETVAT (235 aa)). Residues 244–271 (YSSSPQPQTVAATTVPSNTSWAPTTTSL) show a composition bias toward polar residues. The span at 290–318 (TFTSQGGTPDATAASGAPVSPQAAPVPSQ) shows a compositional bias: low complexity. Residues 329–352 (PSHSDSWLTVTPGTSRPLSTSSGV) show a composition bias toward polar residues. The segment covering 353–366 (FTAATGPTPAAFDT) has biased composition (low complexity). Residues 367–398 (SVSAPSQGIPQGASTTPQAPTHPSRVSESTIS) are compositionally biased toward polar residues. Residues 469–489 (IAWVILAISVPISSCSVLLTV) traverse the membrane as a helical segment. The interaction with CYFIP2 stretch occupies residues 490-575 (CCMKRKKKTA…FVGNDQVSEI (86 aa)).

In terms of assembly, interacts with DST (isoform 1). Interacts with SH3GL2. Interacts (via N-terminus) with CYFIP1 and CYFIP2; the interactions associate TMEM108 with the WAVE1 complex. In terms of processing, glycosylated.

The protein localises to the membrane. Its subcellular location is the postsynaptic density. It is found in the endosome membrane. The protein resides in the cell projection. It localises to the axon. The protein localises to the dendrite. Its subcellular location is the early endosome. Functionally, transmembrane protein required for proper cognitive functions. Involved in the development of dentate gyrus (DG) neuron circuitry, is necessary for AMPA receptors surface expression and proper excitatory postsynaptic currents of DG granule neurons. Regulates the organization and stability of the microtubule network of sensory neurons to allow axonal transport. Through the interaction with DST, mediates the docking of the dynein/dynactin motor complex to vesicle cargos for retrograde axonal transport. In hippocampal neurons, required for BDNF-dependent dendrite outgrowth. Cooperates with SH3GL2 and recruits the WAVE1 complex to facilitate actin-dependent BDNF:NTRK2 early endocytic trafficking and mediate signaling from early endosomes. This chain is Transmembrane protein 108, found in Homo sapiens (Human).